We begin with the raw amino-acid sequence, 90 residues long: Barrier-to-autointegration factor A (90 aa).

Belongs to the BAF family. Homodimer. Interacts with nemp1a and nemp1b. Post-translationally, phosphorylated during S and M phases.

It is found in the nucleus. Its subcellular location is the chromosome. The protein localises to the nucleus envelope. It localises to the cytoplasm. Its function is as follows. Non-specific DNA-binding protein that plays key roles in mitotic nuclear reassembly, chromatin organization, DNA damage response, gene expression and intrinsic immunity against foreign DNA. Contains two non-specific double-stranded DNA (dsDNA)-binding sites which promote DNA cross-bridging. Plays a key role in nuclear membrane reformation at the end of mitosis by driving formation of a single nucleus in a spindle-independent manner. Transiently cross-bridges anaphase chromosomes via its ability to bridge distant DNA sites, leading to the formation of a dense chromatin network at the chromosome ensemble surface that limits membranes to the surface. Also acts as a negative regulator of innate immune activation by restricting CGAS activity toward self-DNA upon acute loss of nuclear membrane integrity. Outcompetes CGAS for DNA-binding, thereby preventing CGAS activation and subsequent damaging autoinflammatory responses. Also involved in DNA damage response; acts by inhibiting the ADP-ribosyltransferase activity of PARP1. Involved in the recognition of exogenous dsDNA in the cytosol: associates with exogenous dsDNA immediately after its appearance in the cytosol at endosome breakdown and is required to avoid autophagy. The sequence is that of Barrier-to-autointegration factor A (banf1-a) from Xenopus laevis (African clawed frog).